The sequence spans 228 residues: Cytidylate kinase (228 aa).

17–25 (GPSASGKGT) contacts ATP.

The protein belongs to the cytidylate kinase family. Type 1 subfamily.

Its subcellular location is the cytoplasm. It catalyses the reaction CMP + ATP = CDP + ADP. It carries out the reaction dCMP + ATP = dCDP + ADP. The polypeptide is Cytidylate kinase (Paraburkholderia xenovorans (strain LB400)).